A 171-amino-acid chain; its full sequence is Disulfide bond formation protein B (171 aa).

Residues 1 to 13 (MSALTRFAQSRLA) are Cytoplasmic-facing. A helical transmembrane segment spans residues 14–30 (WTLLLLTAVGLEACALF). Topologically, residues 31-48 (FQHVMKLDPCVMCIYQRL) are periplasmic. C40 and C43 are joined by a disulfide. Residues 49–64 (AVLGVLTAGLIGVVGH) traverse the membrane as a helical segment. At 65-71 (QFRLLRF) the chain is on the cytoplasmic side. The chain crosses the membrane as a helical span at residues 72–89 (LGVLLWGVSAAWGLKLAL). Over 90–144 (ELVEMQTNPSPFSTCSFLPEFPEWMPLHEWFPSVFLPTGMCTDIPWEMFGITMSQ) the chain is Periplasmic. C104 and C130 are oxidised to a cystine. The chain crosses the membrane as a helical span at residues 145-163 (WMVVAFSTYLIALVVFIVP). The Cytoplasmic segment spans residues 164 to 171 (ALMPTKKA).

This sequence belongs to the DsbB family.

The protein localises to the cell inner membrane. Its function is as follows. Required for disulfide bond formation in some periplasmic proteins. Acts by oxidizing the DsbA protein. In Shewanella loihica (strain ATCC BAA-1088 / PV-4), this protein is Disulfide bond formation protein B.